Reading from the N-terminus, the 267-residue chain is Cyclin-C (267 aa).

The 104-residue stretch at 48–151 folds into the Cyclin N-terminal domain; sequence IQVLGEQLKL…LLENLDCCLI (104 aa).

Belongs to the cyclin family. Cyclin C subfamily. In terms of assembly, component of the Cdk8 module of the Mediator complex, composed of CycC, Cdk8, kto and skd.

Its subcellular location is the nucleus. Component of the Mediator complex, a coactivator involved in regulated gene transcription of nearly all RNA polymerase II-dependent genes. Mediator functions as a bridge to convey information from gene-specific regulatory proteins to the basal RNA polymerase II transcription machinery. Mediator is recruited to promoters by direct interactions with regulatory proteins and serves as a scaffold for the assembly of a functional preinitiation complex with RNA polymerase II and the general transcription factors. Binds to and activates cyclin-dependent kinase Cdk8 that phosphorylates the CTD (C-terminal domain) of the large subunit of RNA polymerase II (RNAp II), which may inhibit the formation of a transcription initiation complex. Required for leg and eye development and macrochaete specification or differentiation. This Drosophila melanogaster (Fruit fly) protein is Cyclin-C (CycC).